Here is a 148-residue protein sequence, read N- to C-terminus: SPbeta prophage-derived uncharacterized protein YomK (148 aa).

The next 2 membrane-spanning stretches (helical) occupy residues 72–92 (WGIG…LFGV) and 104–124 (NALI…RNII).

The protein resides in the cell membrane. The polypeptide is SPbeta prophage-derived uncharacterized protein YomK (yomK) (Bacillus subtilis (strain 168)).